The sequence spans 137 residues: 3-hydroxyacyl-[acyl-carrier-protein] dehydratase FabZ (137 aa).

Residue histidine 46 is part of the active site.

The protein belongs to the thioester dehydratase family. FabZ subfamily.

The protein resides in the cytoplasm. It catalyses the reaction a (3R)-hydroxyacyl-[ACP] = a (2E)-enoyl-[ACP] + H2O. Functionally, involved in unsaturated fatty acids biosynthesis. Catalyzes the dehydration of short chain beta-hydroxyacyl-ACPs and long chain saturated and unsaturated beta-hydroxyacyl-ACPs. This is 3-hydroxyacyl-[acyl-carrier-protein] dehydratase FabZ from Thermotoga maritima (strain ATCC 43589 / DSM 3109 / JCM 10099 / NBRC 100826 / MSB8).